The chain runs to 335 residues: Large ribosomal subunit protein uL3 (335 aa).

3 disordered regions span residues 1-35, 234-256, and 312-335; these read MPQP…ADDG, IGNL…GQTG, and AVRP…SNQG. Residues 244 to 256 show a composition bias toward polar residues; it reads RVRSTVPQQGQTG.

The protein belongs to the universal ribosomal protein uL3 family. As to quaternary structure, part of the 50S ribosomal subunit. Forms a cluster with proteins L14 and L24e.

Functionally, one of the primary rRNA binding proteins, it binds directly near the 3'-end of the 23S rRNA, where it nucleates assembly of the 50S subunit. The chain is Large ribosomal subunit protein uL3 from Halobacterium salinarum (strain ATCC 29341 / DSM 671 / R1).